The chain runs to 86 residues: MAHKKGVGSSRNGRDSNPKYLGVKIFGGQAIDAGNIIVRQRGTQFHPGAGVGLGRDHTLFALVNGKVEFTTKGPKKRRTVSVVAEA.

It belongs to the bacterial ribosomal protein bL27 family.

This Xanthomonas campestris pv. campestris (strain 8004) protein is Large ribosomal subunit protein bL27.